We begin with the raw amino-acid sequence, 44 residues long: Thaumatin-like protein 5 (44 aa).

Belongs to the thaumatin family.

The chain is Thaumatin-like protein 5 from Glebionis coronaria (Crown daisy).